A 350-amino-acid chain; its full sequence is Erythronate-4-phosphate dehydrogenase (350 aa).

2 residues coordinate substrate: S45 and T66. NAD(+) is bound by residues 124 to 125 (QV), D144, 203 to 205 (ASR), and D226. The active site involves R205. Residue E231 is part of the active site. The Proton donor role is filled by H248. G251 contacts NAD(+).

This sequence belongs to the D-isomer specific 2-hydroxyacid dehydrogenase family. PdxB subfamily. As to quaternary structure, homodimer.

It is found in the cytoplasm. The enzyme catalyses 4-phospho-D-erythronate + NAD(+) = (R)-3-hydroxy-2-oxo-4-phosphooxybutanoate + NADH + H(+). It functions in the pathway cofactor biosynthesis; pyridoxine 5'-phosphate biosynthesis; pyridoxine 5'-phosphate from D-erythrose 4-phosphate: step 2/5. Functionally, catalyzes the oxidation of erythronate-4-phosphate to 3-hydroxy-2-oxo-4-phosphonooxybutanoate. This is Erythronate-4-phosphate dehydrogenase from Legionella pneumophila (strain Lens).